The sequence spans 921 residues: uncharacterized protein (921 aa).

The segment at 334–628 (MTKRKFLSID…NLKSIYYDFF (295 aa)) is kinase-like. Positions 401–494 (GSSEWSFGSS…NNNNSDGSSG (94 aa)) are enriched in low complexity. Disordered regions lie at residues 401-499 (GSSE…DNRN) and 664-711 (NLYS…NSNS).

This is an uncharacterized protein from Dictyostelium discoideum (Social amoeba).